A 195-amino-acid chain; its full sequence is Small ribosomal subunit protein bS16 (195 aa).

A compositionally biased stretch (low complexity) spans 171-181 (PEAPVAAAEPA). Residues 171 to 195 (PEAPVAAAEPAPEVKAEEKEEGGEA) form a disordered region.

Belongs to the bacterial ribosomal protein bS16 family.

The sequence is that of Small ribosomal subunit protein bS16 from Chlorobium luteolum (strain DSM 273 / BCRC 81028 / 2530) (Pelodictyon luteolum).